A 235-amino-acid chain; its full sequence is MVNQLEMLYEGKAKKIYATDKEDMVIVHYKDDATAFNGEKKAQIESKGVLNNEITSLIFEMLNKEGIKTHFVEKLNDRDQLCKKVEIVPLEVIVRNVAAGSMAKRLGLEEGYELKTTVFELSYKDDSLGDPLINDYHAVGIGATTFEELNKIYEITAKVNEILKEAFKKQNINLIDFKLEFGRYNGEILLADEISPDTCRFWDATTGEKMDKDRFRRDMGNVINGYREVLNRLRN.

Belongs to the SAICAR synthetase family.

The enzyme catalyses 5-amino-1-(5-phospho-D-ribosyl)imidazole-4-carboxylate + L-aspartate + ATP = (2S)-2-[5-amino-1-(5-phospho-beta-D-ribosyl)imidazole-4-carboxamido]succinate + ADP + phosphate + 2 H(+). Its pathway is purine metabolism; IMP biosynthesis via de novo pathway; 5-amino-1-(5-phospho-D-ribosyl)imidazole-4-carboxamide from 5-amino-1-(5-phospho-D-ribosyl)imidazole-4-carboxylate: step 1/2. This is Phosphoribosylaminoimidazole-succinocarboxamide synthase from Clostridium perfringens (strain 13 / Type A).